An 84-amino-acid polypeptide reads, in one-letter code: UPF0320 protein YNR077C (84 aa).

The protein belongs to the UPF0320 family.

In Saccharomyces cerevisiae (strain ATCC 204508 / S288c) (Baker's yeast), this protein is UPF0320 protein YNR077C.